Consider the following 762-residue polypeptide: MLPFRNYGETIDEYEVQHLLGKGGFACVYKAKCLRTQQNVAIKMIDKKLIQGSGLSSRVRQEVEIHSRLKHPSVLQLHTFFQDGNYVYLVLELADNGELHRYMNQQMKRPFTEQEASSILRQVVDGLLYLHSHNIMHRDISLSNLLLSRDMHVKIADFGLATQLKRPDERHMTMCGTPNYISPEVVSHMSHGLPADLWSVGCMLYTLLVGRPPFDTDAVQSTLNKVVLSDYTMPSHLSYEARDLIEKLLRKNPHERISLEQVLRHPFMVKAGGGSIISYTTTPGASDGYGQSIASGDSGIVTFASNDSKNSQRHMLPQIQEEFGYYQEQRKNYAPHPVYRQSSAEPLNSTEMEWQRIGQSNGHFLAHSTPATGGQVAAKKNNAECISMPPLNTLRLQPTRYKTKNAIMSIMANGEVVIEFIKCKSKMNEDRIVDICRISGDGRRIIIYQPDPGRGLPIRDQPSAVQPENYAYNYDNLPSKHWKKYVYAARFVSLVKSKTPKVTYFSGLAKCHLMENMADFEMCYYSGAKLTKSPTDAVKLYNKHGLLITDQTSGEAMRWIEHSNECFAHCLSICNALELAQTGSNTCFPVTIGRRPTPEVMPSQQRADGLRDTTNFAYSTPKSQQGSINFSISTISSMRSGNDLIGSQLLAAQQNVPIKRLNVPGVGTATELSHGIVQVQFYDGSVISIIPETQGGGITYTQSSGLSTHFPDHDDLPIAVRDRLSQLPQVQMKLKSAPLIGSKKFDCKTTTESAPWHNRMLI.

Residues 14–268 form the Protein kinase domain; the sequence is YEVQHLLGKG…LEQVLRHPFM (255 aa). ATP is bound by residues 20-28 and lysine 43; that span reads LGKGGFACV. Catalysis depends on aspartate 139, which acts as the Proton acceptor. A Cryptic POLO box 1 (CPB1) domain is found at 383–498; that stretch reads AECISMPPLN…ARFVSLVKSK (116 aa). The region spanning 499–602 is the Cryptic POLO box 2 (CPB2) domain; the sequence is TPKVTYFSGL…GRRPTPEVMP (104 aa). The POLO box domain occupies 657–736; sequence PIKRLNVPGV…LPQVQMKLKS (80 aa).

The protein belongs to the protein kinase superfamily. Ser/Thr protein kinase family. CDC5/Polo subfamily. As to quaternary structure, homodimer. Post-translationally, ubiquitinated by the SCF(Slimb) ubiquitin ligase complex; leading to its degradation by the proteasome during interphase and regulating centriole number and ensuring the block to centriole reduplication.

The protein localises to the cytoplasm. It localises to the cytoskeleton. It is found in the microtubule organizing center. The protein resides in the centrosome. Its subcellular location is the centriole. It catalyses the reaction L-seryl-[protein] + ATP = O-phospho-L-seryl-[protein] + ADP + H(+). It carries out the reaction L-threonyl-[protein] + ATP = O-phospho-L-threonyl-[protein] + ADP + H(+). In terms of biological role, serine/threonine-protein kinase that plays a central role in centriole duplication. Able to trigger procentriole formation on the surface of the mother centriole cylinder, using mother centriole as a platform, leading to the recruitment of centriole biogenesis proteins such as sas-6. When overexpressed, it is able to induce centrosome amplification through the simultaneous generation of multiple procentrioles adjoining each parental centriole during S phase. Centrosome amplification following overexpression can initiate tumorigenesis, highlighting the importance of centrosome regulation in cancers. This is Serine/threonine-protein kinase PLK4 (SAK) from Drosophila grimshawi (Hawaiian fruit fly).